Consider the following 445-residue polypeptide: Chromosomal replication initiator protein DnaA (445 aa).

The segment at 1-73 (MSPNSTLWQT…NELATKYSST (73 aa)) is domain I, interacts with DnaA modulators. A domain II region spans residues 73–102 (TPVRLKFVSQEEVIEEPVADRKLTIDYRQG). Residues 103–323 (NLNSTYTFDS…GALIRLISYA (221 aa)) are domain III, AAA+ region. Residues Gly-147, Gly-149, Lys-150, and Thr-151 each coordinate ATP. The domain IV, binds dsDNA stretch occupies residues 324–445 (QTFNLEITMN…KFAVDSIVKK (122 aa)).

Belongs to the DnaA family. In terms of assembly, oligomerizes as a right-handed, spiral filament on DNA at oriC.

Its subcellular location is the cytoplasm. Plays an essential role in the initiation and regulation of chromosomal replication. ATP-DnaA binds to the origin of replication (oriC) to initiate formation of the DNA replication initiation complex once per cell cycle. Binds the DnaA box (a 9 base pair repeat at the origin) and separates the double-stranded (ds)DNA. Forms a right-handed helical filament on oriC DNA; dsDNA binds to the exterior of the filament while single-stranded (ss)DNA is stabiized in the filament's interior. The ATP-DnaA-oriC complex binds and stabilizes one strand of the AT-rich DNA unwinding element (DUE), permitting loading of DNA polymerase. After initiation quickly degrades to an ADP-DnaA complex that is not apt for DNA replication. Binds acidic phospholipids. This chain is Chromosomal replication initiator protein DnaA, found in Acholeplasma laidlawii.